A 426-amino-acid polypeptide reads, in one-letter code: Phosphomethylpyrimidine synthase (426 aa).

Residues Asn-65, Met-94, Tyr-123, His-162, Ser-184–Gly-186, Asp-225–Arg-228, and Glu-264 contribute to the substrate site. His-268 contacts Zn(2+). Tyr-291 contributes to the substrate binding site. His-332 lines the Zn(2+) pocket. Residues Cys-408, Cys-411, and Cys-415 each coordinate [4Fe-4S] cluster.

This sequence belongs to the ThiC family. Requires [4Fe-4S] cluster as cofactor.

The catalysed reaction is 5-amino-1-(5-phospho-beta-D-ribosyl)imidazole + S-adenosyl-L-methionine = 4-amino-2-methyl-5-(phosphooxymethyl)pyrimidine + CO + 5'-deoxyadenosine + formate + L-methionine + 3 H(+). Its pathway is cofactor biosynthesis; thiamine diphosphate biosynthesis. Catalyzes the synthesis of the hydroxymethylpyrimidine phosphate (HMP-P) moiety of thiamine from aminoimidazole ribotide (AIR) in a radical S-adenosyl-L-methionine (SAM)-dependent reaction. This is Phosphomethylpyrimidine synthase from Methanococcus maripaludis (strain DSM 14266 / JCM 13030 / NBRC 101832 / S2 / LL).